The following is a 171-amino-acid chain: 6,7-dimethyl-8-ribityllumazine synthase (171 aa).

Residues phenylalanine 24, 58–60, and 82–84 contribute to the 5-amino-6-(D-ribitylamino)uracil site; these read ALE and AVI. A (2S)-2-hydroxy-3-oxobutyl phosphate-binding site is contributed by 87–88; sequence ET. Histidine 90 serves as the catalytic Proton donor. 5-amino-6-(D-ribitylamino)uracil is bound at residue asparagine 115. Arginine 129 lines the (2S)-2-hydroxy-3-oxobutyl phosphate pocket. Residues 150 to 171 form a disordered region; sequence ALDQLGDDEDEEEDEEDEEERA. The segment covering 154-171 has biased composition (acidic residues); that stretch reads LGDDEDEEEDEEDEEERA.

This sequence belongs to the DMRL synthase family.

It catalyses the reaction (2S)-2-hydroxy-3-oxobutyl phosphate + 5-amino-6-(D-ribitylamino)uracil = 6,7-dimethyl-8-(1-D-ribityl)lumazine + phosphate + 2 H2O + H(+). The protein operates within cofactor biosynthesis; riboflavin biosynthesis; riboflavin from 2-hydroxy-3-oxobutyl phosphate and 5-amino-6-(D-ribitylamino)uracil: step 1/2. Catalyzes the formation of 6,7-dimethyl-8-ribityllumazine by condensation of 5-amino-6-(D-ribitylamino)uracil with 3,4-dihydroxy-2-butanone 4-phosphate. This is the penultimate step in the biosynthesis of riboflavin. This Burkholderia ambifaria (strain ATCC BAA-244 / DSM 16087 / CCUG 44356 / LMG 19182 / AMMD) (Burkholderia cepacia (strain AMMD)) protein is 6,7-dimethyl-8-ribityllumazine synthase.